The sequence spans 70 residues: Putative RNA-binding protein YbcJ (70 aa).

An S4 RNA-binding domain is found at 12–68 (VELCDLLKLEGWSESGAQAKIAIAEGQVKVDGAVETRKRCKIVAGQTVSFAGHSVQV).

In pull-down experiments interacts with CedA.

In terms of biological role, its structure and the presence of conserved basic residues indicates that it probably binds RNA. This Escherichia coli (strain K12) protein is Putative RNA-binding protein YbcJ (ybcJ).